A 528-amino-acid polypeptide reads, in one-letter code: MKEVVYVLLLVLLVSVSDANETKPNIENFLRCLRNRTNPKNPIAEAIYTHENSTFASSYVSYTNNKRCLNPNDTKLIAIVAAKHESHVQATVVCAKSNGIQIRIRSGGHDYEGLSFTSSVPFVILDMHDLRSITIDVFRKQAWVDAGATMGELYTKIAAASKTLAFAGGVCPTLGAGGHISGGGYGNLIRKYGISVDHVVDARIVDVNGNILTGATLGRDLLWAIRGGGGASFGVILSWKINLVDVPKTVTVFKVNKTLEQGVTDVLYKWQLVSSKLPQDLFLRAMPKPVNGVVPSEKTIAVVFYAQFLGSARRLMAIMNKNLPELGLKREDCYEMSWINTTTFWQNYPVGTSTSVLLDRPSGPAGAFYKSKSDYVKKPIPKEEMEKIWKAMLKFNNMWMQWNPYGGVMDKIPADATAFPHRKGNLFKIQYFALWTDANATYANLGLMRDIYHEMEPYVSSNPREAFLNYRDIDVGSNPSGETNLEEAKIYGSKYFLGNFKRLMEVKAKYDPENFFRFEQSIPPASAM.

An N-terminal signal peptide occupies residues 1–19 (MKEVVYVLLLVLLVSVSDA). 4 N-linked (GlcNAc...) asparagine glycosylation sites follow: N20, N35, N52, and N72. A disulfide bond links C32 and C94. An FAD-binding PCMH-type domain is found at 69–246 (LNPNDTKLIA…LSWKINLVDV (178 aa)). The segment at residues 109 to 171 (HDYEGLSFTS…KTLAFAGGVC (63 aa)) is a cross-link (6-(S-cysteinyl)-8alpha-(pros-histidyl)-FAD (His-Cys)). N-linked (GlcNAc...) asparagine glycans are attached at residues N256, N340, and N439.

It belongs to the oxygen-dependent FAD-linked oxidoreductase family. Requires FAD as cofactor. Post-translationally, the FAD cofactor is bound via a bicovalent 6-S-cysteinyl, 8alpha-N1-histidyl FAD linkage.

It localises to the secreted. The protein resides in the cell wall. This chain is Berberine bridge enzyme-like 17, found in Arabidopsis thaliana (Mouse-ear cress).